We begin with the raw amino-acid sequence, 588 residues long: L-fucose isomerase (588 aa).

Catalysis depends on proton acceptor residues E335 and D359. E335, D359, and H525 together coordinate Mn(2+).

Belongs to the L-fucose isomerase family. Mn(2+) is required as a cofactor.

It is found in the cytoplasm. It carries out the reaction L-fucose = L-fuculose. It participates in carbohydrate degradation; L-fucose degradation; L-lactaldehyde and glycerone phosphate from L-fucose: step 1/3. Functionally, converts the aldose L-fucose into the corresponding ketose L-fuculose. In Streptococcus pneumoniae serotype 4 (strain ATCC BAA-334 / TIGR4), this protein is L-fucose isomerase.